The following is a 199-amino-acid chain: GTP cyclohydrolase-2 (199 aa).

GTP is bound at residue 52–56 (RMHSE). Residues Cys-57, Cys-68, and Cys-70 each coordinate Zn(2+). Residues Gln-73, 94–96 (EGR), and Thr-116 each bind GTP. Catalysis depends on Asp-128, which acts as the Proton acceptor. The Nucleophile role is filled by Arg-130. GTP contacts are provided by Thr-151 and Lys-156.

It belongs to the GTP cyclohydrolase II family. The cofactor is Zn(2+).

It carries out the reaction GTP + 4 H2O = 2,5-diamino-6-hydroxy-4-(5-phosphoribosylamino)-pyrimidine + formate + 2 phosphate + 3 H(+). It functions in the pathway cofactor biosynthesis; riboflavin biosynthesis; 5-amino-6-(D-ribitylamino)uracil from GTP: step 1/4. In terms of biological role, catalyzes the conversion of GTP to 2,5-diamino-6-ribosylamino-4(3H)-pyrimidinone 5'-phosphate (DARP), formate and pyrophosphate. The polypeptide is GTP cyclohydrolase-2 (Aliivibrio salmonicida (strain LFI1238) (Vibrio salmonicida (strain LFI1238))).